A 227-amino-acid chain; its full sequence is ATP-dependent dethiobiotin synthetase BioD (227 aa).

13 to 18 is an ATP binding site; that stretch reads DIGKTY. Mg(2+) is bound at residue Thr-17. Residue Lys-38 is part of the active site. Ser-42 lines the substrate pocket. Residues Asp-55, 116-119, and 179-180 each bind ATP; these read EGSG and NN. 2 residues coordinate Mg(2+): Asp-55 and Glu-116.

The protein belongs to the dethiobiotin synthetase family. Homodimer. Mg(2+) serves as cofactor.

The protein resides in the cytoplasm. The catalysed reaction is (7R,8S)-7,8-diammoniononanoate + CO2 + ATP = (4R,5S)-dethiobiotin + ADP + phosphate + 3 H(+). It functions in the pathway cofactor biosynthesis; biotin biosynthesis; biotin from 7,8-diaminononanoate: step 1/2. Functionally, catalyzes a mechanistically unusual reaction, the ATP-dependent insertion of CO2 between the N7 and N8 nitrogen atoms of 7,8-diaminopelargonic acid (DAPA, also called 7,8-diammoniononanoate) to form a ureido ring. The polypeptide is ATP-dependent dethiobiotin synthetase BioD (Clostridium botulinum (strain ATCC 19397 / Type A)).